The sequence spans 306 residues: Tyrosine--tRNA ligase (306 aa).

L-tyrosine contacts are provided by Tyr-32 and Glu-36. A 'HIGH' region motif is present at residues 37–45 (PSGKIHLGH). Residues 151-158 (YPIMQVND) are tyrosine. Gln-173 is a binding site for L-tyrosine. The 'KMSKS' region motif lies at 204–208 (KMSSS). Ser-207 is an ATP binding site. Interaction with t-RNA regions lie at residues 228-231 (KAYC) and 283-288 (HPMDLK).

This sequence belongs to the class-I aminoacyl-tRNA synthetase family. TyrS type 3 subfamily. Homodimer.

It is found in the cytoplasm. The catalysed reaction is tRNA(Tyr) + L-tyrosine + ATP = L-tyrosyl-tRNA(Tyr) + AMP + diphosphate + H(+). Its function is as follows. Catalyzes the attachment of tyrosine to tRNA(Tyr) in a two-step reaction: tyrosine is first activated by ATP to form Tyr-AMP and then transferred to the acceptor end of tRNA(Tyr). The sequence is that of Tyrosine--tRNA ligase (tyrS) from Methanocaldococcus jannaschii (strain ATCC 43067 / DSM 2661 / JAL-1 / JCM 10045 / NBRC 100440) (Methanococcus jannaschii).